The following is a 207-amino-acid chain: LPS-assembly lipoprotein LptE (207 aa).

Residues 1–19 form the signal peptide; it reads MRHRILTLLLGLAVLVTAG. Cys20 carries N-palmitoyl cysteine lipidation. The S-diacylglycerol cysteine moiety is linked to residue Cys20. Residues 168–207 are disordered; that stretch reads KNTQKNGDKPVSDANAAQGSTPTAVNETTLGEPAVSTSAK. Positions 182 to 207 are enriched in polar residues; it reads NAAQGSTPTAVNETTLGEPAVSTSAK.

Belongs to the LptE lipoprotein family. As to quaternary structure, component of the lipopolysaccharide transport and assembly complex. Interacts with LptD.

The protein resides in the cell outer membrane. In terms of biological role, together with LptD, is involved in the assembly of lipopolysaccharide (LPS) at the surface of the outer membrane. Required for the proper assembly of LptD. Binds LPS and may serve as the LPS recognition site at the outer membrane. The sequence is that of LPS-assembly lipoprotein LptE from Yersinia pseudotuberculosis serotype O:1b (strain IP 31758).